The chain runs to 147 residues: Ribosome-binding factor A (147 aa).

The segment at 123-147 (LAKLKEGAQPAGDANPYKTSDEEED) is disordered.

It belongs to the RbfA family. In terms of assembly, monomer. Binds 30S ribosomal subunits, but not 50S ribosomal subunits or 70S ribosomes.

The protein localises to the cytoplasm. Functionally, one of several proteins that assist in the late maturation steps of the functional core of the 30S ribosomal subunit. Associates with free 30S ribosomal subunits (but not with 30S subunits that are part of 70S ribosomes or polysomes). Required for efficient processing of 16S rRNA. May interact with the 5'-terminal helix region of 16S rRNA. The chain is Ribosome-binding factor A from Corynebacterium aurimucosum (strain ATCC 700975 / DSM 44827 / CIP 107346 / CN-1) (Corynebacterium nigricans).